A 113-amino-acid polypeptide reads, in one-letter code: Colipase (113 aa).

The first 18 residues, 1–18 (MEKVLVLLLVSLLAVAYA), serve as a signal peptide directing secretion. The propeptide at 19–23 (APGPR) is enterostatin, activation peptide. Intrachain disulfides connect Cys-35–Cys-46, Cys-41–Cys-57, Cys-45–Cys-79, Cys-67–Cys-87, and Cys-81–Cys-105.

It belongs to the colipase family. In terms of assembly, forms a 1:1 stoichiometric complex with pancreatic lipase. In terms of tissue distribution, expressed by the pancreas.

The protein resides in the secreted. Functionally, colipase is a cofactor of pancreatic lipase. It allows the lipase to anchor itself to the lipid-water interface. Without colipase the enzyme is washed off by bile salts, which have an inhibitory effect on the lipase. Its function is as follows. Enterostatin has a biological activity as a satiety signal. The protein is Colipase of Mus musculus (Mouse).